Consider the following 239-residue polypeptide: MNVNFFVTCIGDALKSRMARDSVLLLEKLGCRVNFPEKQGCCGQPAINSGYIKEAIPGMKNLIAALEDNDDPIISPAGSCTYAVKSYPTYLADEPEWASRAAKVAARMQDLTSFIVNKLGVVDVGASLQGRAVYHPSCSLARKLGVKDEPLTLLKNVRGLELLTFAEQDTCCGFGGTFSVKMAEISGEMVKEKVAHLMEVRPEYLIGADVSCLLNISGRLQREGQKVKVMHIAEVLMSR.

This sequence belongs to the LutA/YkgE family.

This is an uncharacterized protein from Escherichia coli (strain K12).